The primary structure comprises 201 residues: Peptide deformylase (201 aa).

Residues Cys-92 and His-134 each coordinate Fe cation. The active site involves Glu-135. Position 138 (His-138) interacts with Fe cation.

Belongs to the polypeptide deformylase family. It depends on Fe(2+) as a cofactor.

The enzyme catalyses N-terminal N-formyl-L-methionyl-[peptide] + H2O = N-terminal L-methionyl-[peptide] + formate. Functionally, removes the formyl group from the N-terminal Met of newly synthesized proteins. Requires at least a dipeptide for an efficient rate of reaction. N-terminal L-methionine is a prerequisite for activity but the enzyme has broad specificity at other positions. This Rhodopirellula baltica (strain DSM 10527 / NCIMB 13988 / SH1) protein is Peptide deformylase.